The sequence spans 274 residues: Large ribosomal subunit protein uL2cz/uL2cy (274 aa).

Residues 224-253 (NPIDHPHGGGEGRAPIGRKKPTTPWGYPAL) form a disordered region.

It belongs to the universal ribosomal protein uL2 family. As to quaternary structure, part of the 50S ribosomal subunit.

The protein resides in the plastid. The sequence is that of Large ribosomal subunit protein uL2cz/uL2cy (rpl2-A) from Epifagus virginiana (Beechdrops).